We begin with the raw amino-acid sequence, 638 residues long: NBPF family member NBPF4 (638 aa).

Coiled coils occupy residues 10 to 43 and 69 to 115; these read SERAEMNILEINQELRSQLAESNQQFRDLKEKFL and DSVL…KLRE. The interval 157 to 285 is disordered; the sequence is HLVHKLSPEN…VPPRHHDKSN (129 aa). Positions 165-179 are enriched in acidic residues; sequence ENDEDEDEDEDDKDE. Residues 174-261 form the Olduvai 1 domain; the sequence is EDDKDEEVEK…EEEEALNIPP (88 aa). Over residues 192–202 the composition is skewed to basic and acidic residues; it reads EVQKTEEKEVP. Residues 214–226 show a composition bias toward low complexity; sequence SNSHNPSNSNQPH. Basic and acidic residues-rich tracts occupy residues 232–251 and 264–273; these read TFKEHEVDSALVVESEHPHD and QNDHEEEEGK. 2 Olduvai domains span residues 326–399 and 400–503; these read EKQS…ALVD and KIKK…SQAQ. A disordered region spans residues 562–584; it reads GMKNPPQLEDDALEGSASNTQGR.

Belongs to the NBPF family. In terms of tissue distribution, expressed in testis.

Its subcellular location is the cytoplasm. In Homo sapiens (Human), this protein is NBPF family member NBPF4.